Consider the following 104-residue polypeptide: Large ribosomal subunit protein bL21 (104 aa).

This sequence belongs to the bacterial ribosomal protein bL21 family. Part of the 50S ribosomal subunit. Contacts protein L20.

Functionally, this protein binds to 23S rRNA in the presence of protein L20. This chain is Large ribosomal subunit protein bL21, found in Helicobacter pylori (strain P12).